Here is a 185-residue protein sequence, read N- to C-terminus: Ribosome-recycling factor (185 aa).

Belongs to the RRF family.

The protein resides in the cytoplasm. Its function is as follows. Responsible for the release of ribosomes from messenger RNA at the termination of protein biosynthesis. May increase the efficiency of translation by recycling ribosomes from one round of translation to another. This Pasteurella multocida (strain Pm70) protein is Ribosome-recycling factor.